The primary structure comprises 149 residues: MIMDVIEIQKIIPHRYPFLLLDRVTQIKENESLIGYKNITIGDNVFQGHFPGHPIYPGVMILEGMAQAGGILAFKSMGNMTEEEAASKVVYFMSIDRAKFRAPVKPGDRLEYRISVIKNKGQIWVLDGKAYVDDVLVSEAELKAMIVDK.

His-49 is an active-site residue.

Belongs to the thioester dehydratase family. FabZ subfamily.

The protein resides in the cytoplasm. It carries out the reaction a (3R)-hydroxyacyl-[ACP] = a (2E)-enoyl-[ACP] + H2O. Its function is as follows. Involved in unsaturated fatty acids biosynthesis. Catalyzes the dehydration of short chain beta-hydroxyacyl-ACPs and long chain saturated and unsaturated beta-hydroxyacyl-ACPs. The sequence is that of 3-hydroxyacyl-[acyl-carrier-protein] dehydratase FabZ from Sulfurimonas denitrificans (strain ATCC 33889 / DSM 1251) (Thiomicrospira denitrificans (strain ATCC 33889 / DSM 1251)).